The following is a 166-amino-acid chain: UPF0251 protein UNCMA_27150 (166 aa).

This sequence belongs to the UPF0251 family.

This chain is UPF0251 protein UNCMA_27150, found in Methanocella arvoryzae (strain DSM 22066 / NBRC 105507 / MRE50).